The following is a 310-amino-acid chain: MFKHVTVLLEETVDGLDIKPNGTYVDCTLGGGGHSSYLLSQLTEGGKLIAFDQDEIAIQNAKDKFSSYGEQFIAVKSNFRYLSEKLHELGITEVDGILFDLGVSSPQLDTPERGFSYHHDAPLDMRMDQEAPLTAYDVVNNWSYEQLVRIFFQYGEEKFSKQIARKIEAYREKKKIETTGELVELIKEGIPAPARRTGGHPAKRVFQAIRIAVNDELKVFEEALEAAIEIVKPGGRISVITFHSLEDRICKTTFKRNSTTPELPPGLPIIPEEFKPKLKLITRKPILPSDVELEENNRARSAKLRIAEKR.

S-adenosyl-L-methionine-binding positions include 32-34 (GGH), D52, F79, D100, and Q107.

Belongs to the methyltransferase superfamily. RsmH family.

The protein resides in the cytoplasm. It catalyses the reaction cytidine(1402) in 16S rRNA + S-adenosyl-L-methionine = N(4)-methylcytidine(1402) in 16S rRNA + S-adenosyl-L-homocysteine + H(+). In terms of biological role, specifically methylates the N4 position of cytidine in position 1402 (C1402) of 16S rRNA. This is Ribosomal RNA small subunit methyltransferase H from Bacillus cytotoxicus (strain DSM 22905 / CIP 110041 / 391-98 / NVH 391-98).